The primary structure comprises 199 residues: NAD(P)H dehydrogenase (quinone) (199 aa).

Positions 4 to 190 (VLVLYYSAYG…AGARYQGKTI (187 aa)) constitute a Flavodoxin-like domain. FMN contacts are provided by residues 10–15 (SAYGHI) and 78–80 (TRF). Tyr12 lines the NAD(+) pocket. Position 98 (Trp98) interacts with substrate. Residues 113-119 (STATQHG) and His134 contribute to the FMN site.

It belongs to the WrbA family. FMN is required as a cofactor.

The enzyme catalyses a quinone + NADH + H(+) = a quinol + NAD(+). It catalyses the reaction a quinone + NADPH + H(+) = a quinol + NADP(+). This is NAD(P)H dehydrogenase (quinone) from Rhodopseudomonas palustris (strain TIE-1).